Consider the following 515-residue polypeptide: Leucine-rich repeat transmembrane neuronal protein 2 (515 aa).

A signal peptide spans 1–33 (MGLHFKWPLGAPMLAAIYAMSVVLKMLPALGMA). The region spanning 34-61 (CPPKCRCEKLLFYCDSQGFHSVPNATDK) is the LRRNT domain. Residues 34-421 (CPPKCRCEKL…EPDNAIFTQR (388 aa)) are Extracellular-facing. A glycan (N-linked (GlcNAc...) asparagine) is linked at Asn57. LRR repeat units lie at residues 63 to 83 (SLGL…QFAS), 86 to 107 (QLTW…AFQG), 110 to 131 (KLKE…TFTQ), 134 to 155 (NLQN…LFYG), 158 to 179 (KLQT…LFWD), 182 to 203 (SLEF…GFAG), 206 to 227 (KLRE…HFLR), 230 to 251 (SLHT…MDWT), 254 to 275 (TLEK…VFET), and 278 to 299 (NLKI…ILNS). A glycan (N-linked (GlcNAc...) asparagine) is linked at Asn126. N-linked (GlcNAc...) asparagine glycosylation occurs at Asn243. An LRRCT domain is found at 311–362 (NLWECSPRVCALASWLGSFQGRWEHSILCHSPDHTQGEDILDAVHGFQLCWN). N-linked (GlcNAc...) asparagine glycosylation is present at Asn362. Residues 422–442 (VITGTMALLFSFFFIIFIVFI) form a helical membrane-spanning segment. Topologically, residues 443–515 (SRKCCPPTLR…QQLPYKECEV (73 aa)) are cytoplasmic. An Involved in DLG4-binding motif is present at residues 512–515 (ECEV).

It belongs to the LRRTM family. Interacts with DLG4. Interacts with neurexin NRXN1; interaction is mediated by heparan sulfate glycan modification on neurexin. Expressed in neuronal tissues.

Its subcellular location is the cell membrane. The protein resides in the postsynaptic cell membrane. Involved in the development and maintenance of excitatory synapses in the vertebrate nervous system. Regulates surface expression of AMPA receptors and instructs the development of functional glutamate release sites. Acts as a ligand for the presynaptic receptors NRXN1-A and NRXN1-B. In Mus musculus (Mouse), this protein is Leucine-rich repeat transmembrane neuronal protein 2 (Lrrtm2).